Reading from the N-terminus, the 341-residue chain is Glucokinase (341 aa).

18–23 (GDIGGT) serves as a coordination point for ATP.

Belongs to the bacterial glucokinase family.

The protein resides in the cytoplasm. It catalyses the reaction D-glucose + ATP = D-glucose 6-phosphate + ADP + H(+). This Rhizobium etli (strain ATCC 51251 / DSM 11541 / JCM 21823 / NBRC 15573 / CFN 42) protein is Glucokinase.